Reading from the N-terminus, the 501-residue chain is Lysine--tRNA ligase (501 aa).

Positions 411 and 418 each coordinate Mg(2+).

It belongs to the class-II aminoacyl-tRNA synthetase family. Homodimer. The cofactor is Mg(2+).

The protein localises to the cytoplasm. It carries out the reaction tRNA(Lys) + L-lysine + ATP = L-lysyl-tRNA(Lys) + AMP + diphosphate. This is Lysine--tRNA ligase from Pseudomonas aeruginosa (strain UCBPP-PA14).